A 116-amino-acid polypeptide reads, in one-letter code: Large ribosomal subunit protein bL17 (116 aa).

The protein belongs to the bacterial ribosomal protein bL17 family. As to quaternary structure, part of the 50S ribosomal subunit. Contacts protein L32.

The sequence is that of Large ribosomal subunit protein bL17 from Synechococcus sp. (strain JA-3-3Ab) (Cyanobacteria bacterium Yellowstone A-Prime).